We begin with the raw amino-acid sequence, 386 residues long: Probable zinc transporter zrg17 (386 aa).

The next 6 helical transmembrane spans lie at 102–122 (ILFF…ILLT), 128–148 (IVEG…SFLV), 163–183 (MELL…MNLL), 208–228 (VHIH…FALL), 243–263 (FFHG…SLGY), and 268–288 (FLSH…GFSI).

The protein belongs to the cation diffusion facilitator (CDF) transporter (TC 2.A.4) family. SLC30A subfamily. As to quaternary structure, interacts with cis4.

It localises to the cytoplasm. It is found in the nucleus membrane. Probable transporter involved in the regulation of zinc homeostasis. This chain is Probable zinc transporter zrg17 (zrg17), found in Schizosaccharomyces pombe (strain 972 / ATCC 24843) (Fission yeast).